A 57-amino-acid chain; its full sequence is Myrmicitoxin(1)-Pm7a (57 aa).

Residues 1–23 (MMKIIYAFLLIAVVAFMGSGIMA) form the signal peptide. The propeptide occupies 24-31 (EPLAEAIA).

It belongs to the formicidae venom clade 4 family. In terms of tissue distribution, expressed by the venom gland.

The protein localises to the secreted. Its function is as follows. Probable neurotoxin. The protein is Myrmicitoxin(1)-Pm7a of Pogonomyrmex maricopa (Maricopa harvester ant).